Reading from the N-terminus, the 96-residue chain is uncharacterized protein (96 aa).

It localises to the mitochondrion. This is an uncharacterized protein from Saccharomyces cerevisiae (strain ATCC 204508 / S288c) (Baker's yeast).